Consider the following 121-residue polypeptide: Phosphoribosyl-ATP pyrophosphatase (121 aa).

It belongs to the PRA-PH family.

It localises to the cytoplasm. The enzyme catalyses 1-(5-phospho-beta-D-ribosyl)-ATP + H2O = 1-(5-phospho-beta-D-ribosyl)-5'-AMP + diphosphate + H(+). It participates in amino-acid biosynthesis; L-histidine biosynthesis; L-histidine from 5-phospho-alpha-D-ribose 1-diphosphate: step 2/9. The chain is Phosphoribosyl-ATP pyrophosphatase from Burkholderia vietnamiensis (strain G4 / LMG 22486) (Burkholderia cepacia (strain R1808)).